A 246-amino-acid chain; its full sequence is 1-(5-phosphoribosyl)-5-[(5-phosphoribosylamino)methylideneamino] imidazole-4-carboxamide isomerase (246 aa).

The Proton acceptor role is filled by aspartate 8. Aspartate 129 functions as the Proton donor in the catalytic mechanism.

Belongs to the HisA/HisF family.

It localises to the cytoplasm. It carries out the reaction 1-(5-phospho-beta-D-ribosyl)-5-[(5-phospho-beta-D-ribosylamino)methylideneamino]imidazole-4-carboxamide = 5-[(5-phospho-1-deoxy-D-ribulos-1-ylimino)methylamino]-1-(5-phospho-beta-D-ribosyl)imidazole-4-carboxamide. The protein operates within amino-acid biosynthesis; L-histidine biosynthesis; L-histidine from 5-phospho-alpha-D-ribose 1-diphosphate: step 4/9. The sequence is that of 1-(5-phosphoribosyl)-5-[(5-phosphoribosylamino)methylideneamino] imidazole-4-carboxamide isomerase from Nitrobacter hamburgensis (strain DSM 10229 / NCIMB 13809 / X14).